We begin with the raw amino-acid sequence, 401 residues long: Carbamoyl phosphate synthase small chain (401 aa).

A CPSase region spans residues 1–203 (MTATPAWTIQ…EGYSTLGETD (203 aa)). L-glutamine is bound by residues Ser-56, Gly-255, and Gly-257. One can recognise a Glutamine amidotransferase type-1 domain in the interval 207 to 395 (HVVALDYGVK…LNLIREKKGE (189 aa)). Cys-284 serves as the catalytic Nucleophile. L-glutamine-binding residues include Leu-285, Gln-288, Asn-326, Gly-328, and Phe-329. Catalysis depends on residues His-368 and Glu-370.

The protein belongs to the CarA family. As to quaternary structure, composed of two chains; the small (or glutamine) chain promotes the hydrolysis of glutamine to ammonia, which is used by the large (or ammonia) chain to synthesize carbamoyl phosphate. Tetramer of heterodimers (alpha,beta)4.

The catalysed reaction is hydrogencarbonate + L-glutamine + 2 ATP + H2O = carbamoyl phosphate + L-glutamate + 2 ADP + phosphate + 2 H(+). It carries out the reaction L-glutamine + H2O = L-glutamate + NH4(+). It functions in the pathway amino-acid biosynthesis; L-arginine biosynthesis; carbamoyl phosphate from bicarbonate: step 1/1. The protein operates within pyrimidine metabolism; UMP biosynthesis via de novo pathway; (S)-dihydroorotate from bicarbonate: step 1/3. In terms of biological role, small subunit of the glutamine-dependent carbamoyl phosphate synthetase (CPSase). CPSase catalyzes the formation of carbamoyl phosphate from the ammonia moiety of glutamine, carbonate, and phosphate donated by ATP, constituting the first step of 2 biosynthetic pathways, one leading to arginine and/or urea and the other to pyrimidine nucleotides. The small subunit (glutamine amidotransferase) binds and cleaves glutamine to supply the large subunit with the substrate ammonia. The chain is Carbamoyl phosphate synthase small chain from Rhizobium meliloti (strain 1021) (Ensifer meliloti).